Reading from the N-terminus, the 307-residue chain is Aspartate carbamoyltransferase catalytic subunit (307 aa).

Carbamoyl phosphate is bound by residues R56 and T57. K84 serves as a coordination point for L-aspartate. The carbamoyl phosphate site is built by R106, H136, and Q139. 2 residues coordinate L-aspartate: R169 and R221. Positions 262 and 263 each coordinate carbamoyl phosphate.

The protein belongs to the aspartate/ornithine carbamoyltransferase superfamily. ATCase family. Heterododecamer (2C3:3R2) of six catalytic PyrB chains organized as two trimers (C3), and six regulatory PyrI chains organized as three dimers (R2).

The catalysed reaction is carbamoyl phosphate + L-aspartate = N-carbamoyl-L-aspartate + phosphate + H(+). It functions in the pathway pyrimidine metabolism; UMP biosynthesis via de novo pathway; (S)-dihydroorotate from bicarbonate: step 2/3. In terms of biological role, catalyzes the condensation of carbamoyl phosphate and aspartate to form carbamoyl aspartate and inorganic phosphate, the committed step in the de novo pyrimidine nucleotide biosynthesis pathway. The chain is Aspartate carbamoyltransferase catalytic subunit from Streptococcus pneumoniae serotype 2 (strain D39 / NCTC 7466).